The following is a 610-amino-acid chain: DNA mismatch repair protein MutL (610 aa).

Belongs to the DNA mismatch repair MutL/HexB family.

This protein is involved in the repair of mismatches in DNA. It is required for dam-dependent methyl-directed DNA mismatch repair. May act as a 'molecular matchmaker', a protein that promotes the formation of a stable complex between two or more DNA-binding proteins in an ATP-dependent manner without itself being part of a final effector complex. The sequence is that of DNA mismatch repair protein MutL from Rickettsia rickettsii (strain Iowa).